We begin with the raw amino-acid sequence, 26 residues long: Glycyl-poneratoxin (26 aa).

At Arg-25 the chain carries Arginine amide; in delta-paraponeritoxin-Pc1a.

Post-translationally, the glycine-PoTx is a non-amidated form of poneratoxin, with an extra-Gly at C-terminus. This loss of amidation does not alter toxin activity on Nav1.7/SCN9A. In terms of tissue distribution, expressed by the venom gland.

It is found in the secreted. Its function is as follows. Toxin that causes pain in vertebrates by targeting tetrodotoxin (TTX)-sensitive sodium channels in peripheral sensory neurons. Also blocks synaptic transmission and stimulates smooth muscle contraction. Converts the normally rapidly activating and inactivating sodium channel current into one that does not inactivate. Is active on both Nav1.6/SCN8A and Nav1.7/SCN9A sodium channels, with a much potent activity on Nav1.6/SCN8A (EC(50)=97 nM on human channels) than on Nav1.7/SCN9A (EC(50)=2.3 uM on human and EC(50)=1.8 uM on mouse channels). On these channels, causes a sustained current, a reduction in peak current amplitude and a hyperpolarising shift. Modulates Nav1.7/SCN9A in a non-competitive manner with TTX or tetracaine. Toxin-induced persistant current is very slowly reversible with repeated wash steps over 30 minutes. In vivo, shallow intraplantar injection in mice causes immediate, long-lasting and near-maximal nocifensive behaviors, which decrease with coinjection of TTX. When tested on insects, causes paralysis but not mortality at high doses. The chain is Glycyl-poneratoxin from Paraponera clavata (Bullet ant).